The chain runs to 187 residues: Hypoxanthine/guanine phosphoribosyltransferase (187 aa).

It belongs to the purine/pyrimidine phosphoribosyltransferase family. Archaeal HPRT subfamily. Homodimer.

It is found in the cytoplasm. The catalysed reaction is IMP + diphosphate = hypoxanthine + 5-phospho-alpha-D-ribose 1-diphosphate. The enzyme catalyses GMP + diphosphate = guanine + 5-phospho-alpha-D-ribose 1-diphosphate. It participates in purine metabolism; IMP biosynthesis via salvage pathway; IMP from hypoxanthine: step 1/1. Functionally, catalyzes a salvage reaction resulting in the formation of IMP that is energically less costly than de novo synthesis. This is Hypoxanthine/guanine phosphoribosyltransferase from Methanococcus voltae (strain ATCC BAA-1334 / A3).